Here is a 168-residue protein sequence, read N- to C-terminus: Large ribosomal subunit protein uL5 (168 aa).

This sequence belongs to the universal ribosomal protein uL5 family. Part of the 50S ribosomal subunit; contacts the 5S rRNA and probably tRNA. Forms a bridge to the 30S subunit in the 70S ribosome.

Its function is as follows. This is one of the proteins that bind and probably mediate the attachment of the 5S RNA into the large ribosomal subunit, where it forms part of the central protuberance. In the 70S ribosome it contacts protein S13 of the 30S subunit (bridge B1b), connecting the 2 subunits; this bridge is implicated in subunit movement. May contact the P site tRNA; the 5S rRNA and some of its associated proteins might help stabilize positioning of ribosome-bound tRNAs. This chain is Large ribosomal subunit protein uL5, found in Methanospirillum hungatei JF-1 (strain ATCC 27890 / DSM 864 / NBRC 100397 / JF-1).